A 99-amino-acid polypeptide reads, in one-letter code: Acylphosphatase-1 (99 aa).

At A2 the chain carries N-acetylalanine. In terms of domain architecture, Acylphosphatase-like spans 9-99 (SVDYEIFGKV…LDYSDFQIVK (91 aa)). Catalysis depends on residues R24 and N42.

The protein belongs to the acylphosphatase family. In terms of tissue distribution, organ-common type isozyme is found in many different tissues.

It catalyses the reaction an acyl phosphate + H2O = a carboxylate + phosphate + H(+). The polypeptide is Acylphosphatase-1 (ACYP1) (Homo sapiens (Human)).